A 616-amino-acid chain; its full sequence is Carboxylic acid transporter protein homolog (616 aa).

Positions 1–11 (MSSSITDEKIS) are enriched in basic and acidic residues. The disordered stretch occupies residues 1–65 (MSSSITDEKI…LYHNPSLPAQ (65 aa)). Serine 2 carries the post-translational modification N-acetylserine. Topologically, residues 2 to 140 (SSSITDEKIS…LRKMTWQNWN (139 aa)) are cytoplasmic. Serine 4 is modified (phosphoserine). Residue lysine 9 forms a Glycyl lysine isopeptide (Lys-Gly) (interchain with G-Cter in ubiquitin) linkage. Phosphoserine is present on residues serine 11, serine 61, and serine 66. Position 70 is a phosphothreonine (threonine 70). Residues 141 to 161 (YFFMGYFAWLSAAWAFFCVSV) traverse the membrane as a helical segment. At 162-176 (SVAPLAELYDRPTKD) the chain is on the extracellular side. A helical membrane pass occupies residues 177–197 (ITWGLGLVLFVRSAGAVIFGL). Over 198–205 (WTDKSSRK) the chain is Cytoplasmic. Residues 206–226 (WPYITCLFLFVIAQLCTPWCD) traverse the membrane as a helical segment. Over 227 to 230 (TYEK) the chain is Extracellular. The helical transmembrane segment at 231 to 251 (FLGVRWITGIAMGGIYGCASA) threads the bilayer. Residues 252–263 (TAIEDAPVKARS) are Cytoplasmic-facing. A helical transmembrane segment spans residues 264–284 (FLSGLFFSAYAMGFIFAIIFY). Residues 285–296 (RAFGYFRDDGWK) lie on the Extracellular side of the membrane. Residues 297–317 (ILFWFSIFLPILLIFWRLLWP) traverse the membrane as a helical segment. Residues 318–363 (ETKYFTKVLKARKLILSDAVKANGGEPLPKANFKQKMVSMKRTVQK) are Cytoplasmic-facing. A Glycyl lysine isopeptide (Lys-Gly) (interchain with G-Cter in ubiquitin) cross-link involves residue lysine 338. A helical transmembrane segment spans residues 364 to 384 (YWLLFAYLVVLLVGPNYLTHA). Residues 385–402 (SQDLLPTMLRAQLGLSKD) are Extracellular-facing. Residues 403–423 (AVTVIVVVTNIGAICGGMIFG) form a helical membrane-spanning segment. The Cytoplasmic segment spans residues 424 to 432 (QFMEVTGRR). The helical transmembrane segment at 433-453 (LGLLIACTMGGCFTYPAFMLR) threads the bilayer. The Extracellular segment spans residues 454–457 (SEKA). The helical transmembrane segment at 458–478 (ILGAGFMLYFCVFGVWGILPI) threads the bilayer. Topologically, residues 479-489 (HLAELAPADAR) are cytoplasmic. A helical transmembrane segment spans residues 490–510 (ALVAGLSYQLGNLASAAASTI). Over 511–535 (ETQLADRYPLERDASGAVIKEDYAK) the chain is Extracellular. Residues 536–556 (VMAILTGSVFIFTFACVFVGH) form a helical membrane-spanning segment. Residues 557–616 (EKFHRDLSSPVMKKYINQVEEYEADGLSISDIVEQKTECASVKMIDSNVSKTYEEHIETV) are Cytoplasmic-facing. 3 positions are modified to phosphoserine: serine 584, serine 603, and serine 606.

Belongs to the major facilitator superfamily. Sugar transporter (TC 2.A.1.1) family.

It is found in the membrane. Its function is as follows. Essential to lactate transport. The polypeptide is Carboxylic acid transporter protein homolog (JEN1) (Saccharomyces cerevisiae (strain ATCC 204508 / S288c) (Baker's yeast)).